The following is a 258-amino-acid chain: UPF0246 protein Shew_1093 (258 aa).

The protein belongs to the UPF0246 family.

The protein is UPF0246 protein Shew_1093 of Shewanella loihica (strain ATCC BAA-1088 / PV-4).